We begin with the raw amino-acid sequence, 46 residues long: Iota-conotoxin-like M11.1 (46 aa).

Disulfide bonds link Cys5/Cys19, Cys12/Cys22, Cys18/Cys27, and Cys21/Cys38. Met44 carries the D-methionine modification. Position 46 (Arg46) is a propeptide, removed by a carboxypeptidase.

The protein belongs to the conotoxin I1 superfamily. In terms of tissue distribution, expressed by the venom duct.

It localises to the secreted. In terms of biological role, iota-conotoxins bind to voltage-gated sodium channels (Nav) and act as agonists by shifting the voltage-dependence of activation to more hyperpolarized levels. Produces general excitatory symptoms. The polypeptide is Iota-conotoxin-like M11.1 (Conus magus (Magical cone)).